A 224-amino-acid chain; its full sequence is Deoxyribose-phosphate aldolase (224 aa).

D92 serves as the catalytic Proton donor/acceptor. The Schiff-base intermediate with acetaldehyde role is filled by K155. K184 acts as the Proton donor/acceptor in catalysis.

The protein belongs to the DeoC/FbaB aldolase family. DeoC type 1 subfamily.

It localises to the cytoplasm. The catalysed reaction is 2-deoxy-D-ribose 5-phosphate = D-glyceraldehyde 3-phosphate + acetaldehyde. Its pathway is carbohydrate degradation; 2-deoxy-D-ribose 1-phosphate degradation; D-glyceraldehyde 3-phosphate and acetaldehyde from 2-deoxy-alpha-D-ribose 1-phosphate: step 2/2. Its function is as follows. Catalyzes a reversible aldol reaction between acetaldehyde and D-glyceraldehyde 3-phosphate to generate 2-deoxy-D-ribose 5-phosphate. The chain is Deoxyribose-phosphate aldolase from Clostridium perfringens (strain SM101 / Type A).